A 176-amino-acid chain; its full sequence is Glutamyl-tRNA(Gln) amidotransferase subunit F, mitochondrial (176 aa).

Belongs to the GatF family. In terms of assembly, subunit of the heterotrimeric GatFAB amidotransferase (AdT) complex, composed of A, B and F subunits.

It is found in the mitochondrion inner membrane. The enzyme catalyses L-glutamyl-tRNA(Gln) + L-glutamine + ATP + H2O = L-glutaminyl-tRNA(Gln) + L-glutamate + ADP + phosphate + H(+). Functionally, allows the formation of correctly charged Gln-tRNA(Gln) through the transamidation of misacylated Glu-tRNA(Gln) in the mitochondria. The reaction takes place in the presence of glutamine and ATP through an activated gamma-phospho-Glu-tRNA(Gln). Required for proper protein synthesis within the mitochondrion. The polypeptide is Glutamyl-tRNA(Gln) amidotransferase subunit F, mitochondrial (Yarrowia lipolytica (strain CLIB 122 / E 150) (Yeast)).